Consider the following 227-residue polypeptide: Ribose-5-phosphate isomerase A (227 aa).

Residues 26-29 (TGST), 82-85 (DGAD), and 95-98 (KGGG) contribute to the substrate site. Glu104 functions as the Proton acceptor in the catalytic mechanism. Residue Lys122 participates in substrate binding.

The protein belongs to the ribose 5-phosphate isomerase family. Homodimer.

It carries out the reaction aldehydo-D-ribose 5-phosphate = D-ribulose 5-phosphate. It functions in the pathway carbohydrate degradation; pentose phosphate pathway; D-ribose 5-phosphate from D-ribulose 5-phosphate (non-oxidative stage): step 1/1. Catalyzes the reversible conversion of ribose-5-phosphate to ribulose 5-phosphate. In Streptococcus pyogenes serotype M28 (strain MGAS6180), this protein is Ribose-5-phosphate isomerase A.